The following is a 585-amino-acid chain: Tyramine beta-hydroxylase (585 aa).

The first 21 residues, 1 to 21 (MKCANAAALLFFVLCDIGVHG), serve as a signal peptide directing secretion. The DOMON domain occupies 31–142 (SNVTVKWQTD…GTTQFYIAAS (112 aa)). Residues Asn32 and Asn71 are each glycosylated (N-linked (GlcNAc...) asparagine). The active site involves Tyr206. 2 cysteine pairs are disulfide-bonded: Cys208/Cys258 and Cys247/Cys270. Cu(2+) is bound by residues His240 and His241. Positions 308, 386, and 388 each coordinate Cu(2+). 3 cysteine pairs are disulfide-bonded: Cys365-Cys477, Cys369-Cys534, and Cys440-Cys462. His386 is an active-site residue. Asn449 carries an N-linked (GlcNAc...) asparagine glycan. Met461 lines the Cu(2+) pocket. The N-linked (GlcNAc...) asparagine glycan is linked to Asn483.

It belongs to the copper type II ascorbate-dependent monooxygenase family. Requires Cu(2+) as cofactor.

The protein localises to the cytoplasmic vesicle. The protein resides in the secretory vesicle. It localises to the synaptic vesicle. The catalysed reaction is tyramine + L-ascorbate + O2 = (R)-octopamine + L-dehydroascorbate + H2O. In terms of biological role, catalyzes the hydroxylation of tyramine into octopamine, a neurotransmitter involved in pharyngeal pumping and egg laying. The polypeptide is Tyramine beta-hydroxylase (tbh-1) (Caenorhabditis briggsae).